The sequence spans 200 residues: Probable GTP-binding protein EngB (200 aa).

Positions 26 to 200 (SIPEIAIAGR…IYEIAQCIKK (175 aa)) constitute an EngB-type G domain. Residues 34 to 41 (GRSNVGKS), 61 to 65 (GCTKQ), 80 to 83 (DLPG), 147 to 150 (TKID), and 176 to 179 (VISA) contribute to the GTP site. Ser-41 and Thr-63 together coordinate Mg(2+).

The protein belongs to the TRAFAC class TrmE-Era-EngA-EngB-Septin-like GTPase superfamily. EngB GTPase family. Mg(2+) is required as a cofactor.

Functionally, necessary for normal cell division and for the maintenance of normal septation. This chain is Probable GTP-binding protein EngB, found in Ehrlichia canis (strain Jake).